Reading from the N-terminus, the 482-residue chain is Early growth response protein 4 (482 aa).

The interval 274–357 (DLGEGAESLP…PPAKARRKGR (84 aa)) is disordered. Residues 280–290 (ESLPGLLTPPS) are compositionally biased toward low complexity. The span at 291-302 (GEGGSSGEGGEF) shows a compositional bias: gly residues. A compositionally biased stretch (pro residues) spans 337–349 (PEPPVPPPAPFPP). 3 C2H2-type zinc fingers span residues 376–400 (FACPVESCVRSFARSDELNRHLRIH), 406–428 (FQCRICLRNFSRSDHLTTHVRTH), and 434–456 (FACDVCGRRFARSDEKKRHSKVH).

The protein belongs to the EGR C2H2-type zinc-finger protein family. In terms of tissue distribution, expressed in brain. In the cerebellum and frontal cortex.

The protein localises to the nucleus. Transcriptional regulator. Recognizes and binds to the DNA sequence 5'-GCGGGGGCG-3' (GSG). Activates the transcription of target genes whose products are required for mitogenesis and differentiation. The chain is Early growth response protein 4 (EGR4) from Bos taurus (Bovine).